A 430-amino-acid chain; its full sequence is Gamma-glutamyl phosphate reductase (430 aa).

The protein belongs to the gamma-glutamyl phosphate reductase family.

Its subcellular location is the cytoplasm. The catalysed reaction is L-glutamate 5-semialdehyde + phosphate + NADP(+) = L-glutamyl 5-phosphate + NADPH + H(+). It participates in amino-acid biosynthesis; L-proline biosynthesis; L-glutamate 5-semialdehyde from L-glutamate: step 2/2. Its function is as follows. Catalyzes the NADPH-dependent reduction of L-glutamate 5-phosphate into L-glutamate 5-semialdehyde and phosphate. The product spontaneously undergoes cyclization to form 1-pyrroline-5-carboxylate. This Rhodopseudomonas palustris (strain BisA53) protein is Gamma-glutamyl phosphate reductase.